The primary structure comprises 360 residues: Photosystem II protein D1 1 (360 aa).

3 helical membrane passes run Tyr-29–Ile-46, His-118–Leu-133, and Trp-142–Ala-156. Residue His-118 participates in chlorophyll a binding. Tyr-126 contacts pheophytin a. Positions 170 and 189 each coordinate [CaMn4O5] cluster. The chain crosses the membrane as a helical span at residues Phe-197 to Leu-218. His-198 is a chlorophyll a binding site. A quinone contacts are provided by residues His-215 and Ser-264–Phe-265. Fe cation is bound at residue His-215. His-272 is a Fe cation binding site. The helical transmembrane segment at Phe-274–Leu-288 threads the bilayer. [CaMn4O5] cluster is bound by residues His-332, Glu-333, Asp-342, and Ala-344. The propeptide occupies Gly-345–Gly-360.

The protein belongs to the reaction center PufL/M/PsbA/D family. In terms of assembly, PSII is composed of 1 copy each of membrane proteins PsbA, PsbB, PsbC, PsbD, PsbE, PsbF, PsbH, PsbI, PsbJ, PsbK, PsbL, PsbM, PsbT, PsbX, Psb30/Ycf12, peripheral proteins PsbO, CyanoQ (PsbQ), PsbU, PsbV and a large number of cofactors. It forms dimeric complexes. The cofactor is The D1/D2 heterodimer binds P680, chlorophylls that are the primary electron donor of PSII, and subsequent electron acceptors. It shares a non-heme iron and each subunit binds pheophytin, quinone, additional chlorophylls, carotenoids and lipids. D1 provides most of the ligands for the Mn4-Ca-O5 cluster of the oxygen-evolving complex (OEC). There is also a Cl(-1) ion associated with D1 and D2, which is required for oxygen evolution. The PSII complex binds additional chlorophylls, carotenoids and specific lipids.. Post-translationally, tyr-161 forms a radical intermediate that is referred to as redox-active TyrZ, YZ or Y-Z. In terms of processing, C-terminally processed by CtpA; processing is essential to allow assembly of the oxygen-evolving complex and thus photosynthetic growth.

It localises to the cell inner membrane. The enzyme catalyses 2 a plastoquinone + 4 hnu + 2 H2O = 2 a plastoquinol + O2. Functionally, photosystem II (PSII) is a light-driven water:plastoquinone oxidoreductase that uses light energy to abstract electrons from H(2)O, generating O(2) and a proton gradient subsequently used for ATP formation. It consists of a core antenna complex that captures photons, and an electron transfer chain that converts photonic excitation into a charge separation. The D1/D2 (PsbA/PsbD) reaction center heterodimer binds P680, the primary electron donor of PSII as well as several subsequent electron acceptors. The sequence is that of Photosystem II protein D1 1 from Gloeobacter violaceus (strain ATCC 29082 / PCC 7421).